The chain runs to 196 residues: Proteasome subunit beta 2 (196 aa).

Positions 1-6 (MEELPS) are cleaved as a propeptide — removed in mature form; by autocatalysis. Thr7 (nucleophile) is an active-site residue.

Belongs to the peptidase T1B family. As to quaternary structure, the 20S proteasome core is composed of 14 alpha and 14 beta subunits that assemble into four stacked heptameric rings, resulting in a barrel-shaped structure. The two inner rings, each composed of seven catalytic beta subunits, are sandwiched by two outer rings, each composed of seven alpha subunits. The catalytic chamber with the active sites is on the inside of the barrel. Has a gated structure, the ends of the cylinder being occluded by the N-termini of the alpha-subunits. Is capped at one or both ends by the proteasome regulatory ATPase, PAN.

The protein resides in the cytoplasm. The enzyme catalyses Cleavage of peptide bonds with very broad specificity.. Its activity is regulated as follows. The formation of the proteasomal ATPase PAN-20S proteasome complex, via the docking of the C-termini of PAN into the intersubunit pockets in the alpha-rings, triggers opening of the gate for substrate entry. Interconversion between the open-gate and close-gate conformations leads to a dynamic regulation of the 20S proteasome proteolysis activity. Component of the proteasome core, a large protease complex with broad specificity involved in protein degradation. This Metallosphaera sedula (strain ATCC 51363 / DSM 5348 / JCM 9185 / NBRC 15509 / TH2) protein is Proteasome subunit beta 2.